A 1235-amino-acid polypeptide reads, in one-letter code: Receptor-type adenylate cyclase ESAG 4 (1235 aa).

A disordered region spans residues 1-20; that stretch reads MNMLHLSDRNASLAPSGGEH. The Cytoplasmic portion of the chain corresponds to 1-32; it reads MNMLHLSDRNASLAPSGGEHSLPTGGAVCRDA. A helical membrane pass occupies residues 33–53; sequence MDILPVILRAPVALLLLLVVL. The Extracellular portion of the chain corresponds to 54–858; that stretch reads PQLSVGAEAN…SNAGRISGAS (805 aa). N63, N90, N97, N362, N531, N566, N705, and N830 each carry an N-linked (GlcNAc...) asparagine glycan. Residues 859–879 form a helical membrane-spanning segment; that stretch reads LVGIIIGGALALFLVVALGVV. At 880–1235 the chain is on the cytoplasmic side; sequence PYFFLRNTVI…VSSQVEERLL (356 aa). One can recognise a Guanylate cyclase domain in the interval 900-1054; the sequence is TLIFTDIESS…RTSNMAARTE (155 aa). Mg(2+) is bound by residues D905 and D948.

It belongs to the adenylyl cyclase class-3 family. It depends on Mg(2+) as a cofactor.

It localises to the membrane. It catalyses the reaction ATP = 3',5'-cyclic AMP + diphosphate. In terms of biological role, could act as a receptor for an unknown ligand. The sequence is that of Receptor-type adenylate cyclase ESAG 4 (ESAG4) from Trypanosoma brucei brucei.